A 129-amino-acid polypeptide reads, in one-letter code: Capsid protein (129 aa).

Residues E31–I104 are viral RNA-binding.

Belongs to the Leviviricetes capsid protein family. Homodimer. The capsid proteins form dimers that assemble by group of 5. Twelve such pentamers are linked together with free dimers. The homodimers binds to the viral RNA via an operator hairpin, but also to many other RNA sequences in the viral genome; this interaction probably shifts the virus from the replicative to the assembly phase and ensures specific encapsidation of the viral genome.

It localises to the virion. Functionally, capsid protein self-assembles to form an icosahedral capsid with a T=3 symmetry, about 26 nm in diameter, and consisting of 89 capsid proteins dimers (178 capsid proteins). Involved in viral genome encapsidation through the interaction between a capsid protein dimer and the multiple packaging signals present in the RNA genome. The capsid also contains 1 copy of the A2 maturation protein. Acts as a translational repressor of viral replicase synthesis late in infection. This latter function is the result of capsid protein interaction with an RNA hairpin which contains the replicase ribosome-binding site. This is Capsid protein from Escherichia coli (Bacteriophage R17).